The sequence spans 156 residues: Transcription antitermination protein NusB (156 aa).

Belongs to the NusB family.

Functionally, involved in transcription antitermination. Required for transcription of ribosomal RNA (rRNA) genes. Binds specifically to the boxA antiterminator sequence of the ribosomal RNA (rrn) operons. The sequence is that of Transcription antitermination protein NusB from Rickettsia africae (strain ESF-5).